Reading from the N-terminus, the 130-residue chain is Cytochrome c oxidase subunit 13, mitochondrial (130 aa).

The transit peptide at 1-31 directs the protein to the mitochondrion; it reads MSMMNRNIGFLSRTLKTSVPKRAGLLSFRAY. The Mitochondrial matrix portion of the chain corresponds to 32-61; the sequence is SNEAKVNWLEEVQAEEEHAKRSSEFWKKVT. The chain crosses the membrane as a helical span at residues 62 to 80; it reads YYIGGPALILASANAYYIY. Residues 81 to 130 are Mitochondrial intermembrane-facing; sequence CKHQEHAKHVEDTDPGYSFENLRFKKYPWGDGSKTLFWNDKVNHLKKDDE.

Belongs to the cytochrome c oxidase subunit 6A family. Component of the cytochrome c oxidase (complex IV, CIV), a multisubunit enzyme composed of a catalytic core of 3 subunits and several supernumerary subunits. The complex exists as a monomer or a dimer and forms supercomplexes (SCs) in the inner mitochondrial membrane with ubiquinol-cytochrome c oxidoreductase (cytochrome b-c1 complex, complex III, CIII).

The protein localises to the mitochondrion inner membrane. It participates in energy metabolism; oxidative phosphorylation. Its function is as follows. Component of the cytochrome c oxidase, the last enzyme in the mitochondrial electron transport chain which drives oxidative phosphorylation. The respiratory chain contains 3 multisubunit complexes succinate dehydrogenase (complex II, CII), ubiquinol-cytochrome c oxidoreductase (cytochrome b-c1 complex, complex III, CIII) and cytochrome c oxidase (complex IV, CIV), that cooperate to transfer electrons derived from NADH and succinate to molecular oxygen, creating an electrochemical gradient over the inner membrane that drives transmembrane transport and the ATP synthase. Cytochrome c oxidase is the component of the respiratory chain that catalyzes the reduction of oxygen to water. Electrons originating from reduced cytochrome c in the intermembrane space (IMS) are transferred via the dinuclear copper A center (CU(A)) of subunit 2 and heme A of subunit 1 to the active site in subunit 1, a binuclear center (BNC) formed by heme A3 and copper B (CU(B)). The BNC reduces molecular oxygen to 2 water molecules unsing 4 electrons from cytochrome c in the IMS and 4 protons from the mitochondrial matrix. The polypeptide is Cytochrome c oxidase subunit 13, mitochondrial (cox13) (Schizosaccharomyces pombe (strain 972 / ATCC 24843) (Fission yeast)).